Consider the following 231-residue polypeptide: Large ribosomal subunit protein uL1 (231 aa).

It belongs to the universal ribosomal protein uL1 family. Part of the 50S ribosomal subunit.

Its function is as follows. Binds directly to 23S rRNA. The L1 stalk is quite mobile in the ribosome, and is involved in E site tRNA release. Functionally, protein L1 is also a translational repressor protein, it controls the translation of the L11 operon by binding to its mRNA. This is Large ribosomal subunit protein uL1 from Thiobacillus denitrificans (strain ATCC 25259 / T1).